A 380-amino-acid chain; its full sequence is Cytochrome b (380 aa).

4 helical membrane passes run 34–54 (FGSLLAMCLITQILTGLLLAM), 78–99 (WLIRNLHANGASFFFICIFLHI), 114–134 (WNTGVILLLTLMATAFVGYVL), and 179–199 (FFALHFLLPFLIAGITIIHLT). H84 and H98 together coordinate heme b. 2 residues coordinate heme b: H183 and H197. H202 is an a ubiquinone binding site. Helical transmembrane passes span 227 to 247 (IKDILGLTLMLTPFLTLALFS), 289 to 309 (LGGVLALAASVLILLLIPFLH), 321 to 341 (LSQTLFWLLVANLLILTWIGS), and 348 to 368 (FIIIGQMASLSYFTILLILFP).

The protein belongs to the cytochrome b family. As to quaternary structure, the cytochrome bc1 complex contains 11 subunits: 3 respiratory subunits (MT-CYB, CYC1 and UQCRFS1), 2 core proteins (UQCRC1 and UQCRC2) and 6 low-molecular weight proteins (UQCRH/QCR6, UQCRB/QCR7, UQCRQ/QCR8, UQCR10/QCR9, UQCR11/QCR10 and a cleavage product of UQCRFS1). This cytochrome bc1 complex then forms a dimer. It depends on heme b as a cofactor.

The protein localises to the mitochondrion inner membrane. Its function is as follows. Component of the ubiquinol-cytochrome c reductase complex (complex III or cytochrome b-c1 complex) that is part of the mitochondrial respiratory chain. The b-c1 complex mediates electron transfer from ubiquinol to cytochrome c. Contributes to the generation of a proton gradient across the mitochondrial membrane that is then used for ATP synthesis. The polypeptide is Cytochrome b (MT-CYB) (Coturnix japonica (Japanese quail)).